The primary structure comprises 37 residues: Diuretic hormone 1 (37 aa).

This sequence belongs to the sauvagine/corticotropin-releasing factor/urotensin I family.

It is found in the secreted. In terms of biological role, stimulates fluid secretion by the Malpighian tubules. Increases cyclic AMP production. In Tenebrio molitor (Yellow mealworm beetle), this protein is Diuretic hormone 1.